The primary structure comprises 442 residues: UDP-glycosyltransferase 79B7 (442 aa).

UDP-alpha-D-glucose-binding positions include S260, 319–321 (VQQ), 336–344 (HCGPGTIWE), and 358–361 (LSDQ).

This sequence belongs to the UDP-glycosyltransferase family.

This is UDP-glycosyltransferase 79B7 (UGT79B7) from Arabidopsis thaliana (Mouse-ear cress).